A 1031-amino-acid chain; its full sequence is Translation initiation factor IF-2 (1031 aa).

Disordered regions lie at residues 33 to 369 and 388 to 436; these read KSHS…GDVL and LKPL…AESL. A compositionally biased stretch (basic and acidic residues) spans 45–56; the sequence is ELVRSKLSEPRV. Low complexity predominate over residues 96-105; that stretch reads PAPAQQQAAA. Residues 108 to 123 are compositionally biased toward polar residues; that stretch reads ASSSKPSPQRPDQLSS. Residues 148–171 are compositionally biased toward low complexity; that stretch reads PAAQEPQPAAASTRPEAAAKAGSP. The span at 184 to 200 shows a compositional bias: pro residues; that stretch reads VLPPPRRAASGPEPPQR. The span at 250–281 shows a compositional bias: basic and acidic residues; it reads TRPEPRSPVAKKEESSDSGKADEAPRPQRRLE. Over residues 286–299 the composition is skewed to pro residues; sequence PTRPVAKPLPPEPD. The span at 419-435 shows a compositional bias: low complexity; sequence RPSASAEATAPEAAAES. Positions 522–695 constitute a tr-type G domain; the sequence is PRPPVVTIMG…LLVADVAELQ (174 aa). The segment at 531–538 is G1; that stretch reads GHVDHGKT. 531-538 serves as a coordination point for GTP; the sequence is GHVDHGKT. The tract at residues 556 to 560 is G2; sequence GITQR. The interval 581–584 is G3; it reads DTPG. GTP is bound by residues 581-585 and 635-638; these read DTPGH and NKID. The interval 635-638 is G4; it reads NKID. The tract at residues 671–673 is G5; it reads SAL.

It belongs to the TRAFAC class translation factor GTPase superfamily. Classic translation factor GTPase family. IF-2 subfamily.

It is found in the cytoplasm. Functionally, one of the essential components for the initiation of protein synthesis. Protects formylmethionyl-tRNA from spontaneous hydrolysis and promotes its binding to the 30S ribosomal subunits. Also involved in the hydrolysis of GTP during the formation of the 70S ribosomal complex. The chain is Translation initiation factor IF-2 from Synechococcus sp. (strain JA-3-3Ab) (Cyanobacteria bacterium Yellowstone A-Prime).